We begin with the raw amino-acid sequence, 398 residues long: Signal-regulatory protein beta-1 (398 aa).

A signal peptide spans 1 to 29 (MPVPASWPHLPSPFLLMTLLLGRLTGVAG). The 107-residue stretch at 30 to 136 (EDELQVIQPE…SPDDVEFKSG (107 aa)) folds into the Ig-like V-type domain. Residues 30-371 (EDELQVIQPE…EAALAPTAPL (342 aa)) lie on the Extracellular side of the membrane. Disulfide bonds link cysteine 54/cysteine 120 and cysteine 169/cysteine 227. 2 consecutive Ig-like C1-type domains span residues 147–246 (PSAP…ANLS) and 253–347 (PTLE…YALE). N-linked (GlcNAc...) asparagine glycosylation is found at asparagine 244, asparagine 269, and asparagine 291. A helical membrane pass occupies residues 372 to 392 (LVALLLGPKLLLVVGVSAIYI). Residues 393–398 (CWKQKA) are Cytoplasmic-facing.

Homodimer; disulfide-linked. Interacts with TYROBP. This interaction results in the recruitment of SYK. In terms of processing, N-glycosylated. As to expression, detected in monocytes and dendritic cells.

It localises to the cell membrane. Its function is as follows. Immunoglobulin-like cell surface receptor involved in the negative regulation of receptor tyrosine kinase-coupled signaling processes. Also participates in the recruitment of tyrosine kinase SYK. Triggers activation of myeloid cells when associated with TYROBP. The protein is Signal-regulatory protein beta-1 (SIRPB1) of Homo sapiens (Human).